The sequence spans 274 residues: Probable endonuclease LCL3 (274 aa).

A helical transmembrane segment spans residues 15-32 (AVLSIILTGSTLTLIYTY). Positions 53–261 (HWLYGKVTSV…RSRKKGLWIQ (209 aa)) constitute a TNase-like domain. Residue R151 is part of the active site. D156 contributes to the Ca(2+) binding site. Catalysis depends on residues E159 and R199.

Belongs to the LCL3 family.

Its subcellular location is the mitochondrion. It localises to the membrane. This is Probable endonuclease LCL3 (LCL3) from Saccharomyces cerevisiae (strain Lalvin EC1118 / Prise de mousse) (Baker's yeast).